Consider the following 938-residue polypeptide: MSVRLRFLSQGDAGAVGTVGRSASFAGFSSAQSRRLSKSINRNSVRSRLPAKSSKAYRTLRKGSLCLDPRPQQVKKIFDALKRGLREHLCEQQAELDYLCGRHTDTQRGSRLAFYYDLDKQLRLVERHIRKVEFHISKVDELYEAYCIQWRLRDGASNMQRAFSNSTQSRASRESLQELGRSLQECLEDMCLIEGTLEGHLGEFQVKMKGLVGYARLCPGDQYEVLMRLGRQRWRLKGRIEPDDSQTWDEEERVFVPTVHENLEIKVTELRGLSSMVVGAVTCDVADFFMARPQLVVVDITELGTIKLQLELLWNPLDSECRLVSPSPTGRFSMGSRKGSLYTWTPPSTPSFRDKYYLSLLQQPVQQSLLLGGPKATSILGYLSDSELQGPRLRSRSQELLEMDSFSSEDPRDTETSTSASTSDVGFLPVPVGSAACTEEETREGPPPLGLLPGLAHPARGVLVERPGWRDLGGERLALLQDAPIHSPMVPRSRKGQEDGDVGDGVEGPVQEVLDLLRSADPAQPQLRELEYQVLGLRERLKPRGVQPEPVSAQSLMDCILESFAFLNADLASDELSLFGGSQAPERDSPPPPRPSLKVSPSELTAGAPELDTLLTVHLQVCKALLQKLASPNLSRMVEDCLLEEAVQQRQVLEVLSDLDLEQVSKARSVEEIIPQASHRKGGLALWQGCTQPGGVLACPASTLLSQLKKTFLHRVRGKYPGQLEIVCRRLLEQVVGCGGLLVPAGLQEEQVVTWFQFHSYLQRQSISDLEKHLAQLTKEVTLIEELSCAGPAKALRKLHGKCLSQLQPLPQTLQAWALLQLDGPPRLCRAARTRLASAARNKRFREKALLYYTNALNDSDAKVQQAACVALQQLGGIESCEQIVSLCQSDLEAVRVAAREATLSFGEKGRLAFEKMDKLHSEQEAFCQEADVEITIF.

Phosphoserine occurs at positions 9, 24, and 340. A Phosphothreonine modification is found at Thr345. Ser351 and Ser384 each carry phosphoserine. Disordered stretches follow at residues Glu402–Val430 and Phe579–Glu603.

This sequence belongs to the RIPOR family.

The chain is RIPOR family member 3 from Mus musculus (Mouse).